We begin with the raw amino-acid sequence, 932 residues long: MSDEEDYDIAGTLALAGSDSEPESDLNSDNEEVQDEIVSDEDDTKHKPNKKQKLEKGKSKQTFPSLELSDDEAENESKDMASYFVANNPQAKKAKNGSFPSFGFSKFLLTNISKKGFKQPTPIQRKTIPLIMENRDVVGMARTGSGKTAAFTLPLVEKLKSHSPRVGVRAIILSPSRELASQTFKQVKEFSKGTDLRSIVLIGGDSLEEQFSSMMTNPDVIVATPGRFLHLKVEMELELKTVEYIVFDEADRLFEMGFAEQLNELIAALPSSRQSLLFSATLPRSLIDFAKAGLTNPVLVRLDAETKISDQLQMAFFSIKNNEREASLLYVLQEVIKLPLASPEEVKRYSDMEKRDNGSEDEAEDENNNKKKRFKFKKERLPPANMLPSKHSTIIFVPTKHHVEYVTTLLKDAGYLVSYIYGTLDQHARKQQLYQFRIGMTSLLVVTDVAARGIDIPILANVVNYTLPGSSKIFIHRVGRTARAGNSGWAYSIVNEKELPYLLDLELFLGRKVLLTSMHEKKCEMLKTKQSSNYVEPKVSYTDRLVLGSIPRVDIETFQELYENILRNHYELSVVKGVATKGEKLYYRTRQSASQESLKRSKEILSTGNWDDQHLLFGPNLEKEKEKFLTQLLNRKSKETVFEFNKKGNDRDEDSLVEFMHKRRKQIAPIQRRAKEKRELLEKERMAGLTHGIENEILKNDGEIGYSGITIEADEEELQDAFEDADELIEKKKIEKKKSFRDPQYFLSHYAPAAVIQDQQLSLSSSFANDAAKATFDLDNDEKLNANKQVMQWDRKKGNYVNAHSTDKKFIIGESGQKIPATYRSGRFDDWKKQRNLKPTKTGAMEANATNGNDRRFKHKKVASPKLPDKFRDDYHKQKEKVKKAVDSGLKVKGYNKPGQKQELRSTEDIRKAREAKDKKKQKNARPSRKRK.

The disordered stretch occupies residues 1–74 (MSDEEDYDIA…SLELSDDEAE (74 aa)). A compositionally biased stretch (acidic residues) spans 20 to 42 (SEPESDLNSDNEEVQDEIVSDED). The Q motif signature appears at 97–125 (GSFPSFGFSKFLLTNISKKGFKQPTPIQR). Residues 128 to 300 (IPLIMENRDV…KAGLTNPVLV (173 aa)) enclose the Helicase ATP-binding domain. Residue 141–148 (ARTGSGKT) participates in ATP binding. A DEAD box motif is present at residues 248 to 251 (DEAD). Over residues 349–358 (YSDMEKRDNG) the composition is skewed to basic and acidic residues. Disordered regions lie at residues 349–375 (YSDM…KRFK) and 860–932 (KKVA…RKRK). The 161-residue stretch at 369–529 (NKKKRFKFKK…EKKCEMLKTK (161 aa)) folds into the Helicase C-terminal domain. Composition is skewed to basic and acidic residues over residues 867–877 (LPDKFRDDYHK) and 900–918 (QKQE…EAKD). Residues 919 to 932 (KKKQKNARPSRKRK) are compositionally biased toward basic residues.

Belongs to the DEAD box helicase family. DDX54/DBP10 subfamily.

It is found in the nucleus. Its subcellular location is the nucleolus. It carries out the reaction ATP + H2O = ADP + phosphate + H(+). Functionally, ATP-binding RNA helicase involved in the biogenesis of 60S ribosomal subunits and is required for the normal formation of 25S and 5.8S rRNAs. In Debaryomyces hansenii (strain ATCC 36239 / CBS 767 / BCRC 21394 / JCM 1990 / NBRC 0083 / IGC 2968) (Yeast), this protein is ATP-dependent RNA helicase DBP10 (DBP10).